A 228-amino-acid chain; its full sequence is Protein 33K (228 aa).

A disordered region spans residues 1–156; it reads MAPKKKLQLP…GALRLAPNEP (156 aa). The span at 15–53 shows a compositional bias: acidic residues; the sequence is TDEEEYWDSQAEEVLDEEEEMMEDWDSLDEASEAEEVSD. 2 stretches are compositionally biased toward low complexity: residues 54–63 and 104–119; these read ETPSPSVAFP and AAPTAPAAAAAAATAA. Residues 171-198 are necessary for nuclear subcellular location; sequence YAIFQQSRGQEQELKIKNRSLRSLTRSC. An RS-repeat; required for splicing enhancer activity region spans residues 177–197; the sequence is SRGQEQELKIKNRSLRSLTRS.

Belongs to the adenoviridae splicing factor family. As to quaternary structure, homooligomer. Interacts with DBP; this interaction occurs at a unique vertex during genome packaging. Interacts with IVa2; this interaction occurs at a unique vertex during genome packaging and seems to potentiate IVa2 and 33K oligomerization. Post-translationally, phosphorylated in vitro by human PKA and PRKDC. PRKDC inhibits, whereas PKA activates the splicing factor.

The protein resides in the host nucleus. In terms of biological role, promotes alternative splicing of late transcripts by promoting splicing at weak 3' splice sites. Required for the temporal activation of major late pre-mRNA splicing at late times of infection. Induces the splicing and expression of the late capsid vertex protein. Probably functions as the small terminase that is part of the molecular motor that translocates genomic DNA in empty capsid during DNA packaging. This motor is located at a unique vertex and comprises at least the IVa2 ATPase, the small terminase 33K and probably a portal. Forms a ring-like structure of about 17 nm in which genomic DNA is translocated into the capsid. Stimulates IVa2 ATPase activity in the presence of the viral genome. Once the DNA is packaged, the terminase detaches: the 33K protein is present in the empty particles, but not in the mature virions. Also involved in virion assembly. This Homo sapiens (Human) protein is Protein 33K.